A 197-amino-acid chain; its full sequence is Glycerol-3-phosphate acyltransferase (197 aa).

The next 5 helical transmembrane spans lie at 1–21, 50–70, 82–102, 112–132, and 159–179; these read MDFI…GLLI, LGFA…VLAA, IVCL…YLGF, LGVF…VFAA, and GASQ…WIKH.

It belongs to the PlsY family. As to quaternary structure, probably interacts with PlsX.

It localises to the cell inner membrane. It catalyses the reaction an acyl phosphate + sn-glycerol 3-phosphate = a 1-acyl-sn-glycero-3-phosphate + phosphate. Its pathway is lipid metabolism; phospholipid metabolism. Its function is as follows. Catalyzes the transfer of an acyl group from acyl-phosphate (acyl-PO(4)) to glycerol-3-phosphate (G3P) to form lysophosphatidic acid (LPA). This enzyme utilizes acyl-phosphate as fatty acyl donor, but not acyl-CoA or acyl-ACP. The polypeptide is Glycerol-3-phosphate acyltransferase (Desulfotalea psychrophila (strain LSv54 / DSM 12343)).